Consider the following 704-residue polypeptide: Arylphorin (704 aa).

The signal sequence occupies residues 1-16; sequence MKIVLVLAGLIALVQS. 3 N-linked (GlcNAc...) asparagine glycosylation sites follow: Asn-73, Asn-212, and Asn-360.

Belongs to the hemocyanin family. As to quaternary structure, homohexamer of two stacked trimers; disulfide-linked. Glycosylation at Asn-360 is required for proper folding.

It localises to the secreted. The protein resides in the extracellular space. Its function is as follows. Arylphorin is a larval storage protein (LSP) which may serve as a storage protein used primarily as a source of aromatic amino acids for protein synthesis during metamorphosis. It is a constituent of the sclerotizing system of the cuticle, and serves as a carrier for ecdysteroid hormone. The chain is Arylphorin from Antheraea pernyi (Chinese oak silk moth).